Reading from the N-terminus, the 190-residue chain is Early nodulin-like protein 12 (190 aa).

Residues 1–21 (MGIIVPVLTLVFLLFAKVSHG) form the signal peptide. The Phytocyanin domain maps to 26–130 (RVILVGGSVG…GEKITLVVLA (105 aa)). N-linked (GlcNAc...) asparagine glycosylation is present at Asn44. Cys84 and Cys118 are joined by a disulfide. Positions 135–164 (GGGSSSGDAPKVSPVSPTAQTPAPAPGPAA) are disordered. Residues 151–164 (PTAQTPAPAPGPAA) show a composition bias toward low complexity. Asn167 is lipidated: GPI-anchor amidated asparagine. The propeptide at 168-190 (AAVGLKVASGWFLTAVVVGLAMA) is removed in mature form.

The protein belongs to the early nodulin-like (ENODL) family. In terms of tissue distribution, confined to flowers and siliques. Expressed in female gametophytes.

Its subcellular location is the cell membrane. Its function is as follows. May act as a carbohydrate transporter. Required, together with ENODL11, ENODL12, ENODL13, ENODL14 and ENODL15, for male-female communication and pollen tube reception and burst at the synergid cell surface of the female gametophyte. The polypeptide is Early nodulin-like protein 12 (Arabidopsis thaliana (Mouse-ear cress)).